The chain runs to 249 residues: Dihydroneopterin 2',3'-cyclic phosphate phosphodiesterase (249 aa).

The 115-residue stretch at 58-172 (LIEHTISVTK…VHYADEADSK (115 aa)) folds into the HD domain.

As to quaternary structure, homododecamer. Fe(2+) serves as cofactor. It depends on Zn(2+) as a cofactor.

It catalyses the reaction 7,8-dihydroneopterin 2',3'-cyclic phosphate + H2O = 7,8-dihydroneopterin 3'-phosphate + H(+). The catalysed reaction is 7,8-dihydroneopterin 2',3'-cyclic phosphate + H2O = 7,8-dihydroneopterin 2'-phosphate + H(+). It participates in cofactor biosynthesis; 5,6,7,8-tetrahydromethanopterin biosynthesis. Cyclic phosphodiesterase that hydrolyzes the cyclic phosphate of 7,8-dihydroneopterin 2',3'-cyclic phosphate (H2N-cP) and converts it to a mixture of 7,8-dihydroneopterin 2'-phosphate (H2N-2'P) and 7,8-dihydroneopterin 3'-phosphate (H2N-3'P). Is also able to utilize other phosphodiesters as substrates in vitro: hydrolysis of bis-pNPP and pNPPC produces nitrophenyl phosphate, and that of 2',3'-cAMP produces 3'-AMP. ATP, 3',5'-cAMP, GTP, 3',5'-cGMP, and 4',5'-cFMN cannot serve as substrates. The polypeptide is Dihydroneopterin 2',3'-cyclic phosphate phosphodiesterase (mptB) (Methanocaldococcus jannaschii (strain ATCC 43067 / DSM 2661 / JAL-1 / JCM 10045 / NBRC 100440) (Methanococcus jannaschii)).